A 201-amino-acid polypeptide reads, in one-letter code: UPF0301 protein Smed_0532 (201 aa).

This sequence belongs to the UPF0301 (AlgH) family.

The protein is UPF0301 protein Smed_0532 of Sinorhizobium medicae (strain WSM419) (Ensifer medicae).